We begin with the raw amino-acid sequence, 97 residues long: Unclassified hydrophobin F (97 aa).

Positions 1–17 are cleaved as a signal peptide; that stretch reads MRVSALAFAAVLSLVSA. Cystine bridges form between Cys-24/Cys-75, Cys-39/Cys-67, Cys-40/Cys-58, and Cys-76/Cys-85.

It localises to the secreted. It is found in the cell wall. Aerial growth, conidiation, and dispersal of filamentous fungi in the environment rely upon a capability of their secreting small amphipathic proteins called hydrophobins (HPBs) with low sequence identity. Class I can self-assemble into an outermost layer of rodlet bundles on aerial cell surfaces, conferring cellular hydrophobicity that supports fungal growth, development and dispersal; whereas Class II form highly ordered films at water-air interfaces through intermolecular interactions but contribute nothing to the rodlet structure. In P.expansum, hydrophobins contribute to germination, tolerance to cold stress and mycotoxins patulin and citrinin production. HfbC, HfbD, HfbE, and HfbF have functional redundancy in fungal surface hydrophobicity. This is Unclassified hydrophobin F from Penicillium expansum (Blue mold rot fungus).